Reading from the N-terminus, the 958-residue chain is Glycine dehydrogenase (decarboxylating) (958 aa).

Lysine 707 carries the N6-(pyridoxal phosphate)lysine modification.

Belongs to the GcvP family. As to quaternary structure, the glycine cleavage system is composed of four proteins: P, T, L and H. Pyridoxal 5'-phosphate serves as cofactor.

The enzyme catalyses N(6)-[(R)-lipoyl]-L-lysyl-[glycine-cleavage complex H protein] + glycine + H(+) = N(6)-[(R)-S(8)-aminomethyldihydrolipoyl]-L-lysyl-[glycine-cleavage complex H protein] + CO2. Its function is as follows. The glycine cleavage system catalyzes the degradation of glycine. The P protein binds the alpha-amino group of glycine through its pyridoxal phosphate cofactor; CO(2) is released and the remaining methylamine moiety is then transferred to the lipoamide cofactor of the H protein. In Stutzerimonas stutzeri (strain A1501) (Pseudomonas stutzeri), this protein is Glycine dehydrogenase (decarboxylating).